The following is a 141-amino-acid chain: MAMTFHVDIVSAEESIYSGTAQMVVAPAEGGEVGILPRHSQYIAQLKPGEVRVKVSDSGEEHSIFISGGLLEVQPHVVTVLADTAVRAKDLDEAEAKEAMRRAEEALSDRKADFDYAKAQAELIEAAARLRMIEKLRRHTR.

This sequence belongs to the ATPase epsilon chain family. F-type ATPases have 2 components, CF(1) - the catalytic core - and CF(0) - the membrane proton channel. CF(1) has five subunits: alpha(3), beta(3), gamma(1), delta(1), epsilon(1). CF(0) has three main subunits: a, b and c.

The protein resides in the cell inner membrane. Its function is as follows. Produces ATP from ADP in the presence of a proton gradient across the membrane. This chain is ATP synthase epsilon chain, found in Thioalkalivibrio sulfidiphilus (strain HL-EbGR7).